Consider the following 365-residue polypeptide: Tubulin-like protein CetZ (365 aa).

GTP contacts are provided by residues 10-14, 103-105, E136, N163, and N181; these read QCGGK and GTG.

It belongs to the CetZ family.

Its subcellular location is the cytoplasm. Its function is as follows. Involved in cell shape control. The sequence is that of Tubulin-like protein CetZ from Pyrococcus abyssi (strain GE5 / Orsay).